The following is a 626-amino-acid chain: MDRTKSKSSGFLTLSAGALGVVYGDIGTSPLYTVREIFGGAYAIQLTQENILGALSLIFWALFIIVAVKYVVFVMHADNHGEGGIMALTALALRQRHRRKHRAWIISLGLFGTALFYGDGMITPAISVLGAMEGLGIATAALSHYVVPASILILLALFLIQRRGTERVGRLFGPIMLLWFLSIGTLGFVSLRQTPEVLAALNPLHGFRFLTAHQGLGFAALGAVVLAVTGAEALYADMGHFGKAPIRVTWFAVVFPSLILNYLGQGALLIRNPEAVQNPFYLLVPEWALYPMIGLATAATVIASQAVISGAFSLTHQAIQLDYLPRQRMVHTSESERGQIYAPAVNRLLLISVLALVLAFGSSSRLASAYGLAVVGTMVVTTLLALVVAHDTWRWPGLALLVTGAVLLSVDLSFLTANLAKLGDGGWIPLSLGLILATVMSTWKKGRDVLFARLQQESESLSRFLQRLTDEPPPFRPVGTAIFLTARNLSLPFALLRNYEHNQVIHQRVILLTMTTLDKPYAAEKEKITIEALEHNFFRITTRFGFMERPNVLRMLNLCRHAGLHIDLEQTTFFLGRETLIRSAERGLNRWEEVLFISMFRNAYNPTGYFKLPVDRVVELGTVIAI.

Transmembrane regions (helical) follow at residues 11–31 (FLTLSAGALGVVYGDIGTSPL), 55–75 (LSLIFWALFIIVAVKYVVFVM), 103–123 (AWIISLGLFGTALFYGDGMIT), 140–160 (AALSHYVVPASILILLALFLI), 171–191 (LFGPIMLLWFLSIGTLGFVSL), 216–236 (LGFAALGAVVLAVTGAEALYA), 250–270 (WFAVVFPSLILNYLGQGALLI), 282–302 (LLVPEWALYPMIGLATAATVI), 340–360 (IYAPAVNRLLLISVLALVLAF), 369–389 (AYGLAVVGTMVVTTLLALVVA), 395–415 (WPGLALLVTGAVLLSVDLSFL), and 422–442 (LGDGGWIPLSLGLILATVMST).

This sequence belongs to the HAK/KUP transporter (TC 2.A.72) family.

Its subcellular location is the cell inner membrane. It catalyses the reaction K(+)(in) + H(+)(in) = K(+)(out) + H(+)(out). Its function is as follows. Transport of potassium into the cell. Likely operates as a K(+):H(+) symporter. This is Probable potassium transport system protein Kup from Methylococcus capsulatus (strain ATCC 33009 / NCIMB 11132 / Bath).